Consider the following 75-residue polypeptide: Protein P8 (75 aa).

The interval 19–47 is disordered; the sequence is PMGGMPSIASSSSAETGQQTQSGNFTGGG. A compositionally biased stretch (polar residues) spans 26-39; sequence IASSSSAETGQQTQ. The helical transmembrane segment at 55–72 threads the bilayer; that stretch reads NNQLLIVGAVVIGLFLVI.

Its subcellular location is the virion membrane. This chain is Protein P8 (VIII), found in Pseudoalteromonas phage PM2 (Bacteriophage PM2).